The primary structure comprises 135 residues: Mediator of RNA polymerase II transcription subunit 10 (135 aa).

The protein belongs to the Mediator complex subunit 10 family. In terms of assembly, component of the Mediator complex, which is composed of MED1, MED4, MED6, MED7, MED8, MED9, MED10, MED11, MED12, MED13, MED13L, MED14, MED15, MED16, MED17, MED18, MED19, MED20, MED21, MED22, MED23, MED24, MED25, MED26, MED27, MED29, MED30, MED31, CCNC, CDK8 and CDC2L6/CDK11. The MED12, MED13, CCNC and CDK8 subunits form a distinct module termed the CDK8 module. Mediator containing the CDK8 module is less active than Mediator lacking this module in supporting transcriptional activation. Individual preparations of the Mediator complex lacking one or more distinct subunits have been variously termed ARC, CRSP, DRIP, PC2, SMCC and TRAP.

The protein resides in the nucleus. Functionally, component of the Mediator complex, a coactivator involved in the regulated transcription of nearly all RNA polymerase II-dependent genes. Mediator functions as a bridge to convey information from gene-specific regulatory proteins to the basal RNA polymerase II transcription machinery. Mediator is recruited to promoters by direct interactions with regulatory proteins and serves as a scaffold for the assembly of a functional preinitiation complex with RNA polymerase II and the general transcription factors. This chain is Mediator of RNA polymerase II transcription subunit 10 (Med10), found in Mus musculus (Mouse).